A 131-amino-acid polypeptide reads, in one-letter code: MNIFRLLLATLLVSLCFLTAYSHLAEEKPKDDRSLRSNSSVNLLDFPSVSIVALNKKSKKISRKEAEKKRSSKKKASMKNVARPRPPPPNPCVATRNSCKSPAPACCDPCASCQCRFFRSACTCRVLSPSC.

The signal sequence occupies residues 1–20 (MNIFRLLLATLLVSLCFLTA). Asparagine 38 carries an N-linked (GlcNAc...) asparagine glycan. The segment at 57-104 (KSKKISRKEAEKKRSSKKKASMKNVARPRPPPPNPCVATRNSCKSPAP) is disordered. Intrachain disulfides connect cysteine 92/cysteine 107, cysteine 99/cysteine 113, cysteine 106/cysteine 124, cysteine 110/cysteine 131, and cysteine 115/cysteine 122. Residues 92–131 (CVATRNSCKSPAPACCDPCASCQCRFFRSACTCRVLSPSC) form the Agouti domain.

Its subcellular location is the secreted. Functionally, involved in the regulation of melanogenesis. The binding of ASP to MC1R precludes alpha-MSH initiated signaling and thus blocks production of cAMP, leading to a down-regulation of eumelanogenesis (brown/black pigment) and thus increasing synthesis of pheomelanin (yellow/red pigment). The polypeptide is Agouti-signaling protein (ASIP) (Vulpes vulpes (Red fox)).